Reading from the N-terminus, the 360-residue chain is C-C chemokine receptor type 4 (360 aa).

The Extracellular segment spans residues 1–39 (MNPTDIADTTLDESIYSNYYLYESIPKPCTKEGIKAFGE). The helical transmembrane segment at 40-67 (LFLPPLYSLVFVFGLLGNSVVVLVLFKY) threads the bilayer. Residues 68-77 (KRLRSMTDVY) are Cytoplasmic-facing. A helical transmembrane segment spans residues 78–98 (LLNLAISDLLFVFSLPFWGYY). At 99 to 111 (AADQWVFGLGLCK) the chain is on the extracellular side. Cysteine 110 and cysteine 187 are joined by a disulfide. Residues 112-133 (MISWMYLVGFYSGIFFVMLMSI) traverse the membrane as a helical segment. Topologically, residues 134 to 150 (DRYLAIVHAVFSLRART) are cytoplasmic. The helical transmembrane segment at 151 to 175 (LTYGVITSLATWSVAVFASLPGFLF) threads the bilayer. Over 176 to 206 (STCYTERNHTYCKTKYSLNSTTWKVLSSLEI) the chain is Extracellular. 2 N-linked (GlcNAc...) asparagine glycosylation sites follow: asparagine 183 and asparagine 194. A helical membrane pass occupies residues 207-226 (NILGLVIPLGIMLFCYSMII). Residues 227–242 (RTLQHCKNEKKNKAVK) lie on the Cytoplasmic side of the membrane. A helical transmembrane segment spans residues 243-267 (MIFAVVVLFLGFWTPYNIVLFLETL). Residues 268 to 284 (VELEVLQDCTFERYLDY) lie on the Extracellular side of the membrane. The helical transmembrane segment at 285-308 (AIQATETLAFVHCCLNPIIYFFLG) threads the bilayer. Residues 309–360 (EKFRKYILQLFKTCRGLFVLCQYCGLLQIYSADTPSSSYTQSTMDHDLHDAL) lie on the Cytoplasmic side of the membrane.

It belongs to the G-protein coupled receptor 1 family. In natural killer cells, CCL22 binding induces phosphorylation on yet undefined Ser/Thr residues, most probably by beta-adrenergic receptor kinases 1 and 2. In terms of tissue distribution, predominantly expressed in the thymus, in peripheral blood leukocytes, including T-cells, mostly CD4+ cells, and basophils, and in platelets; at lower levels, in the spleen and in monocytes. Detected also in macrophages, IL-2-activated natural killer cells and skin-homing memory T-cells, mostly the ones expressing the cutaneous lymphocyte antigen (CLA). Expressed in brain microvascular and coronary artery endothelial cells.

Its subcellular location is the cell membrane. High affinity receptor for the C-C type chemokines CCL17/TARC, CCL22/MDC and CKLF isoform 1/CKLF1. The activity of this receptor is mediated by G(i) proteins which activate a phosphatidylinositol-calcium second messenger system. Can function as a chemoattractant homing receptor on circulating memory lymphocytes and as a coreceptor for some primary HIV-2 isolates. In the CNS, could mediate hippocampal-neuron survival. The polypeptide is C-C chemokine receptor type 4 (CCR4) (Homo sapiens (Human)).